The sequence spans 271 residues: Formamidopyrimidine-DNA glycosylase (271 aa).

The active-site Schiff-base intermediate with DNA is proline 2. Catalysis depends on glutamate 3, which acts as the Proton donor. Lysine 57 acts as the Proton donor; for beta-elimination activity in catalysis. Residues histidine 90, arginine 109, and lysine 151 each coordinate DNA. The FPG-type zinc-finger motif lies at 236-270 (HVYGRGGKTCTQCGHMLSEIKLGQRATVFCSLCQQ). The active-site Proton donor; for delta-elimination activity is arginine 260.

It belongs to the FPG family. Monomer. Requires Zn(2+) as cofactor.

It catalyses the reaction Hydrolysis of DNA containing ring-opened 7-methylguanine residues, releasing 2,6-diamino-4-hydroxy-5-(N-methyl)formamidopyrimidine.. The catalysed reaction is 2'-deoxyribonucleotide-(2'-deoxyribose 5'-phosphate)-2'-deoxyribonucleotide-DNA = a 3'-end 2'-deoxyribonucleotide-(2,3-dehydro-2,3-deoxyribose 5'-phosphate)-DNA + a 5'-end 5'-phospho-2'-deoxyribonucleoside-DNA + H(+). Its function is as follows. Involved in base excision repair of DNA damaged by oxidation or by mutagenic agents. Acts as a DNA glycosylase that recognizes and removes damaged bases. Has a preference for oxidized purines, such as 7,8-dihydro-8-oxoguanine (8-oxoG). Has AP (apurinic/apyrimidinic) lyase activity and introduces nicks in the DNA strand. Cleaves the DNA backbone by beta-delta elimination to generate a single-strand break at the site of the removed base with both 3'- and 5'-phosphates. The chain is Formamidopyrimidine-DNA glycosylase from Shewanella pealeana (strain ATCC 700345 / ANG-SQ1).